Reading from the N-terminus, the 140-residue chain is Protein ripply1 (140 aa).

The WRPW motif; required for gro2-binding signature appears at 28–31 (WRPW). The ripply homology domain stretch occupies residues 71–106 (HPVRLYWPRSKSFDYLFSDGEALLRNFPVQATINFY). Positions 107-126 (DESDSEDEEESCDEDDESDV) are disordered.

It belongs to the ripply family. In terms of assembly, interacts with gro2 via the WRPW motif. In terms of tissue distribution, expressed in the embryonic anterior presomitic mesoderm and in newly formed somites.

The protein resides in the nucleus. Plays a role in somitogenesis. Essential for transcriptional repression of the segmental patterning genes, thus terminating the segmentation program in the presomitic mesoderm, and also required for the maintenance of rostrocaudal polarity in somites. This chain is Protein ripply1, found in Danio rerio (Zebrafish).